A 644-amino-acid chain; its full sequence is MEAVVNSDVFLTSNTGLKSSYTNQTLSLVDEDHIHTSDKSLSCSVCNSLSQIVDDDFISAGARNQRTKPKRAGNDQAQQTTKKDCMVSIDEVASTHDWSTRLRNDGNAIAKYLTTNKYDTSNFTIQDMLNIMNKLNIVRTNRNELFQLLTHVKSTLNNASVSVKCTHPLVLIHSRASPRIGDQLKELDKIYSPSNHHILLSTTRFQSMHFTDMSSSQDLSFIYRKPETNYYIHPILMALFGIKLPALENAYVHGDTYSLIQQLYEFRRVKSYNYMLLVNRLTEDNPIVITGVSDLISTEIQRANMHTMIRKAIMNIRMGIFYCNDDDAVDPHLMKIIHTGCSQVMTDEEQILASILSIVGFRPTLVSVARPINGISYDMKLQAAPYIVVNPMKMITTSDSPISINSKDIYSMAFDGNSGRVVFAPPNIGYGRCSGVTHIDSLGTNVMGSAVHSPVIVNGAMMFYVERRQNKNMFGGECYTGFRSLIDDTPIDVSPEIMLNGIMYRLKSAVCYKLGDQFFDCGSSDIFLKGHYTILFTENGPWMYDPLSVFNPGARNARLMRALKNQYKKLSMDSDDGFYEWLNGDGSVFAASKQQMLMNHVANFDDDLLTMEEAMSMISRHCCILIYAQDYDQYISARHITELF.

The propeptide occupies 1 to 61 (MEAVVNSDVF…IVDDDFISAG (61 aa)). Residues 61–80 (GARNQRTKPKRAGNDQAQQT) are disordered.

The protein belongs to the orthopoxvirus OPG129 family. Post-translationally, the 73-kDa precursor is cleaved to a mature protein of 60 kDa during virion maturation. Proteolytic cleavage of major core proteins OPG129, OPG136, and OPG098, which occurs at a late stage of core formation, is required for production of infectious mature virions (MV).

It localises to the virion. Major component of the virion core that undergoes proteolytic processing during the immature virion (IV) to mature virion (MV) transition. Essential for the formation of a structurally normal core. This Variola virus (isolate Human/India/Ind3/1967) (VARV) protein is Major core protein OPG129 (OPG129).